The sequence spans 61 residues: UPF0370 protein Spro_3503 (61 aa).

A helical transmembrane segment spans residues 3-23 (WLADYWWIILLILVGMIISGI). Over residues 38–48 (KPELPPHRDNN) the composition is skewed to basic and acidic residues. A disordered region spans residues 38–61 (KPELPPHRDNNAEWDDDDDWPKKK). A compositionally biased stretch (acidic residues) spans 49–61 (AEWDDDDDWPKKK).

Belongs to the UPF0370 family.

It localises to the cell membrane. The sequence is that of UPF0370 protein Spro_3503 from Serratia proteamaculans (strain 568).